The sequence spans 220 residues: MVALHTLLLTAFAAVSLANPIPAPELEARQIINANDLENGVCKPVVLIFARGSTELGNMGAIAGMPTCNALKLALGSQNVACQGVGGAYTASLIPNFLPANTNQASIREATGVFEMAHTRCPNSQIVAGGYSQGSAVMDNTIQDLPDVIKNKVKGVVLFGFTRNLQDLGRIPNYPKEQTKVICAVGDLVCVGTLIITPAHLTYTLNAPEAAQFLASMVSV.

The first 18 residues, 1–18 (MVALHTLLLTAFAAVSLA), serve as a signal peptide directing secretion. 2 disulfide bridges follow: C42-C121 and C68-C82. S132 (nucleophile) is an active-site residue. A disulfide bond links C183 and C190. D187 is an active-site residue. H200 functions as the Proton donor/acceptor in the catalytic mechanism.

This sequence belongs to the cutinase family.

It is found in the secreted. It carries out the reaction cutin + H2O = cutin monomers.. Catalyzes the hydrolysis of complex carboxylic polyesters found in the cell wall of plants. Degrades cutin, a macromolecule that forms the structure of the plant cuticle. This chain is Probable cutinase 5, found in Aspergillus terreus (strain NIH 2624 / FGSC A1156).